The following is a 149-amino-acid chain: Large ribosomal subunit protein bL9 (149 aa).

This sequence belongs to the bacterial ribosomal protein bL9 family.

Functionally, binds to the 23S rRNA. The sequence is that of Large ribosomal subunit protein bL9 from Ligilactobacillus salivarius (strain UCC118) (Lactobacillus salivarius).